The following is a 132-amino-acid chain: Agouti-signaling protein (132 aa).

Residues 1–22 (MDVTRLLLATLLVFLCFFTADS) form the signal peptide. N-linked (GlcNAc...) asparagine glycosylation occurs at Asn-39. Positions 62–85 (ISRKEAEKKRSSKKEASMKTVARP) are disordered. Over residues 63 to 78 (SRKEAEKKRSSKKEAS) the composition is skewed to basic and acidic residues. 5 disulfide bridges follow: Cys-93/Cys-108, Cys-100/Cys-114, Cys-107/Cys-125, Cys-111/Cys-132, and Cys-116/Cys-123. Residues 93-132 (CVATRNSCKPPAPACCDPCASCQCRFFRSACSCRVLSLNC) form the Agouti domain.

The protein localises to the secreted. In terms of biological role, involved in the regulation of melanogenesis. The binding of ASP to MC1R precludes alpha-MSH initiated signaling and thus blocks production of cAMP, leading to a down-regulation of eumelanogenesis (brown/black pigment) and thus increasing synthesis of pheomelanin (yellow/red pigment). The sequence is that of Agouti-signaling protein (ASIP) from Pongo pygmaeus (Bornean orangutan).